The primary structure comprises 99 residues: N(2)-fixation sustaining protein CowN (99 aa).

Belongs to the CowN family.

In terms of biological role, is required to sustain N(2)-dependent growth in the presence of low levels of carbon monoxide (CO). Probably acts by protecting the N(2) fixation ability of the nitrogenase complex, which is inactivated in the presence of CO. The protein is N(2)-fixation sustaining protein CowN of Magnetococcus marinus (strain ATCC BAA-1437 / JCM 17883 / MC-1).